The primary structure comprises 682 residues: Iron-phytosiderophore transporter yellow stripe 1 (682 aa).

A disordered region spans residues 1 to 36 (MDLARRGGAAGADDEGEIERHEPAPEDMESDPAAAR). 15 helical membrane passes run 56–76 (GVVA…KIAL), 79–99 (GLVP…LRGW), 124–144 (CAVA…LLGL), 167–187 (GFGW…LSLI), 236–256 (LSFV…CGFV), 288–308 (LVNI…WPLI), 334–354 (FLCI…VFGV), 396–416 (FPAW…AVII), 428–448 (VIVA…GTGL), 460–480 (IALF…AGLA), 514–534 (VAQF…FLLF), 549–569 (APYG…FSVL), 574–594 (LALS…RDVL), 612–632 (FLVG…VFVW), and 640–660 (AVFM…IWTF).

The protein belongs to the YSL (TC 2.A.67.2) family. As to expression, expressed in roots of young maize seedlings. Not detected in leaves of iron-sufficient plants, but accumulates in roots and leaves of iron-deficient plants.

Its subcellular location is the membrane. In terms of biological role, involved in Fe(3+) uptake. Acts as a proton-coupled symporter for phytosiderophore- and nicotianamine-chelated metals. Capable of transporting either Fe(2+)-nicotianamine or Fe(3+)-phytosiderophore. May transport iron, zinc, nickel, copper and, at a lower rate, manganese and cadmium. This is Iron-phytosiderophore transporter yellow stripe 1 (YS1) from Zea mays (Maize).